The following is a 117-amino-acid chain: Large ribosomal subunit protein bL17 (117 aa).

The protein belongs to the bacterial ribosomal protein bL17 family. In terms of assembly, part of the 50S ribosomal subunit. Contacts protein L32.

In Campylobacter jejuni subsp. jejuni serotype O:6 (strain 81116 / NCTC 11828), this protein is Large ribosomal subunit protein bL17.